The primary structure comprises 152 residues: Deoxyuridine 5'-triphosphate nucleotidohydrolase (152 aa).

Substrate-binding positions include 72–74 (RSG), Asn85, and 89–91 (TID).

Belongs to the dUTPase family. Mg(2+) is required as a cofactor.

The enzyme catalyses dUTP + H2O = dUMP + diphosphate + H(+). Its pathway is pyrimidine metabolism; dUMP biosynthesis; dUMP from dCTP (dUTP route): step 2/2. Functionally, this enzyme is involved in nucleotide metabolism: it produces dUMP, the immediate precursor of thymidine nucleotides and it decreases the intracellular concentration of dUTP so that uracil cannot be incorporated into DNA. This chain is Deoxyuridine 5'-triphosphate nucleotidohydrolase, found in Rhodopseudomonas palustris (strain BisB18).